The following is a 109-amino-acid chain: Spermidine export protein MdtI (109 aa).

Residues 1-5 are Periplasmic-facing; it reads MAQFE. A helical transmembrane segment spans residues 6-26; sequence WVHAAWLALAIVLEIIANVFL. Topologically, residues 27–35 are cytoplasmic; it reads KFSDGFRRK. Residues 36 to 56 form a helical membrane-spanning segment; sequence IFGLLSLAAVLAAFSALSQAV. The Periplasmic segment spans residues 57-63; that stretch reads KGIDLSV. Residues 64 to 84 traverse the membrane as a helical segment; the sequence is AYALWGGFGIAATLAAGWILF. At 85 to 87 the chain is on the cytoplasmic side; sequence GQR. A helical transmembrane segment spans residues 88-108; it reads LNRKGWIGLVLLLAGMIMVKL. Position 109 (Ala-109) is a topological domain, periplasmic.

The protein belongs to the drug/metabolite transporter (DMT) superfamily. Small multidrug resistance (SMR) (TC 2.A.7.1) family. MdtI subfamily. Forms a complex with MdtJ.

It localises to the cell inner membrane. Its function is as follows. Catalyzes the excretion of spermidine. This is Spermidine export protein MdtI (mdtI) from Escherichia coli O6:H1 (strain CFT073 / ATCC 700928 / UPEC).